We begin with the raw amino-acid sequence, 78 residues long: Acyl carrier protein (78 aa).

The region spanning 2-77 (SNIEERVKKI…AAIDYVTSNA (76 aa)) is the Carrier domain. Serine 37 carries the O-(pantetheine 4'-phosphoryl)serine modification.

It belongs to the acyl carrier protein (ACP) family. In terms of processing, 4'-phosphopantetheine is transferred from CoA to a specific serine of apo-ACP by AcpS. This modification is essential for activity because fatty acids are bound in thioester linkage to the sulfhydryl of the prosthetic group.

The protein resides in the cytoplasm. Its pathway is lipid metabolism; fatty acid biosynthesis. In terms of biological role, carrier of the growing fatty acid chain in fatty acid biosynthesis. The chain is Acyl carrier protein from Vibrio cholerae serotype O1 (strain ATCC 39315 / El Tor Inaba N16961).